The sequence spans 103 residues: Large ribosomal subunit protein uL24 (103 aa).

Belongs to the universal ribosomal protein uL24 family. In terms of assembly, part of the 50S ribosomal subunit.

Functionally, one of two assembly initiator proteins, it binds directly to the 5'-end of the 23S rRNA, where it nucleates assembly of the 50S subunit. One of the proteins that surrounds the polypeptide exit tunnel on the outside of the subunit. This is Large ribosomal subunit protein uL24 from Bacillus cytotoxicus (strain DSM 22905 / CIP 110041 / 391-98 / NVH 391-98).